Reading from the N-terminus, the 895-residue chain is DNA mismatch repair protein MutS (895 aa).

607–614 (GPNMSGKS) lines the ATP pocket.

It belongs to the DNA mismatch repair MutS family.

Functionally, this protein is involved in the repair of mismatches in DNA. It is possible that it carries out the mismatch recognition step. This protein has a weak ATPase activity. The polypeptide is DNA mismatch repair protein MutS (Bacillus cytotoxicus (strain DSM 22905 / CIP 110041 / 391-98 / NVH 391-98)).